Consider the following 405-residue polypeptide: Tyrosine--tRNA ligase (405 aa).

Position 35 (Tyr-35) interacts with L-tyrosine. The short motif at 40-49 (TTSSSLHIGH) is the 'HIGH' region element. L-tyrosine contacts are provided by Tyr-166 and Gln-170. A 'KMSKS' region motif is present at residues 226–230 (KMGKS). Position 229 (Lys-229) interacts with ATP. Residues 340-404 (ILLIDLMLDS…VGKKKFLRIV (65 aa)) enclose the S4 RNA-binding domain.

It belongs to the class-I aminoacyl-tRNA synthetase family. TyrS type 1 subfamily. Homodimer.

Its subcellular location is the cytoplasm. It carries out the reaction tRNA(Tyr) + L-tyrosine + ATP = L-tyrosyl-tRNA(Tyr) + AMP + diphosphate + H(+). Functionally, catalyzes the attachment of tyrosine to tRNA(Tyr) in a two-step reaction: tyrosine is first activated by ATP to form Tyr-AMP and then transferred to the acceptor end of tRNA(Tyr). The polypeptide is Tyrosine--tRNA ligase (Borrelia garinii subsp. bavariensis (strain ATCC BAA-2496 / DSM 23469 / PBi) (Borreliella bavariensis)).